Reading from the N-terminus, the 215-residue chain is High mobility group protein B1 (215 aa).

A DNA-binding region (HMG box 1) is located at residues 9 to 79 (PRGKMSSYAF…RYEKEMKNYV (71 aa)). The residue at position 23 (Cys-23) is a Cysteine sulfonic acid (-SO3H); alternate. Cysteines 23 and 45 form a disulfide. The interval 27 to 43 (HKKKHPDASVNFSEFSK) is NLS 1. A Nuclear localization signal (NLS) 1 motif is present at residues 27–43 (HKKKHPDASVNFSEFSK). At Cys-45 the chain carries Cysteine sulfonic acid (-SO3H); alternate. The tract at residues 75-95 (MKNYVPPKGETKKKFKDPNAP) is disordered. Residues 83-94 (GETKKKFKDPNA) show a composition bias toward basic and acidic residues. The segment at residues 95 to 163 (PKRPPSAFFL…KYEKDIAAYR (69 aa)) is a DNA-binding region (HMG box 2). Position 106 is a cysteine sulfonic acid (-SO3H) (Cys-106). A compositionally biased stretch (basic and acidic residues) spans 166–179 (GKVDAGKKVVAKAE). The disordered stretch occupies residues 166–215 (GKVDAGKKVVAKAEKSKKKKEEEEDEDEDEEDEEDEEEEEEEEEDDDDDE). The segment at 178-184 (AEKSKKK) is NLS 2. The Nuclear localization signal (NLS) 2 signature appears at 178-184 (AEKSKKK). A compositionally biased stretch (acidic residues) spans 187 to 215 (EEEDEDEDEEDEEDEEEEEEEEEDDDDDE). An involved in intramolecular interaction with K-3 region spans residues 196 to 210 (EDEEDEEEEEEEEED). Residues 211–215 (DDDDE) form an involved in interaction with histone H3 region.

The protein belongs to the HMGB family. Reduction/oxidation of cysteine residues Cys-23, Cys-45 and Cys-106 and a possible intramolecular disulfide bond involving Cys-23 and Cys-45 give rise to different redox forms with specific functional activities: 1- fully reduced HMGB1 (HMGB1C23hC45hC106h), 2- disulfide HMGB1 (HMGB1C23-C45C106h) and 3- sulfonyl HMGB1 (HMGB1C23soC45soC106so).

The protein resides in the nucleus. It is found in the chromosome. Its subcellular location is the cytoplasm. The protein localises to the secreted. Its function is as follows. Multifunctional redox sensitive protein with various roles in different cellular compartments. Nuclear functions are attributed to fully reduced HGMB1. Associates with chromatin and binds DNA with a preference to non-canonical DNA structures such as single-stranded DNA, DNA-containing cruciforms or bent structures, supercoiled DNA and ZDNA. Can bent DNA and enhance DNA flexibility by looping thus providing a mechanism to promote activities on various gene promoters. Can restructure the canonical nucleosome. Proposed to be an universal biosensor for nucleic acids. May promote inflammatory response to sterile and infectious signals and may be involved in the coordination and integration of innate and adaptive immune responses. In the cytoplasm may function as sensor and/or chaperone for immunogenic nucleic acids, and mediate autophagy. May act as danger associated molecular pattern (DAMP) molecule that amplifies immune responses during tissue injury. This Gallus gallus (Chicken) protein is High mobility group protein B1 (HMGB1).